The sequence spans 327 residues: Flotillin-like protein FloA (327 aa).

The chain crosses the membrane as a helical span at residues I2–V22. Residues A305 to K327 form a disordered region. The segment covering N318–K327 has biased composition (basic and acidic residues).

Belongs to the flotillin-like FloA family. Homooligomerizes.

Its subcellular location is the cell membrane. It is found in the membrane raft. In terms of biological role, found in functional membrane microdomains (FMM) that may be equivalent to eukaryotic membrane rafts. FMMs are highly dynamic and increase in number as cells age. Flotillins are thought to be important factors in membrane fluidity. The sequence is that of Flotillin-like protein FloA from Staphylococcus saprophyticus subsp. saprophyticus (strain ATCC 15305 / DSM 20229 / NCIMB 8711 / NCTC 7292 / S-41).